We begin with the raw amino-acid sequence, 853 residues long: Protein translocase subunit SecA (853 aa).

ATP contacts are provided by residues Q77, 95–99, and D532; that span reads GEGKT.

Belongs to the SecA family. In terms of assembly, monomer and homodimer. Part of the essential Sec protein translocation apparatus which comprises SecA, SecYEG and auxiliary proteins SecDF. Other proteins may also be involved.

It is found in the cell inner membrane. The protein localises to the cytoplasm. It carries out the reaction ATP + H2O + cellular proteinSide 1 = ADP + phosphate + cellular proteinSide 2.. In terms of biological role, part of the Sec protein translocase complex. Interacts with the SecYEG preprotein conducting channel. Has a central role in coupling the hydrolysis of ATP to the transfer of proteins into and across the cell membrane, serving as an ATP-driven molecular motor driving the stepwise translocation of polypeptide chains across the membrane. This chain is Protein translocase subunit SecA, found in Thermosipho melanesiensis (strain DSM 12029 / CIP 104789 / BI429).